Here is a 294-residue protein sequence, read N- to C-terminus: tRNA-cytidine(32) 2-sulfurtransferase (294 aa).

The PP-loop motif motif lies at 58-63; sequence SGGKDS. [4Fe-4S] cluster contacts are provided by Cys133, Cys136, and Cys224.

It belongs to the TtcA family. Homodimer. It depends on Mg(2+) as a cofactor. [4Fe-4S] cluster is required as a cofactor.

It localises to the cytoplasm. It catalyses the reaction cytidine(32) in tRNA + S-sulfanyl-L-cysteinyl-[cysteine desulfurase] + AH2 + ATP = 2-thiocytidine(32) in tRNA + L-cysteinyl-[cysteine desulfurase] + A + AMP + diphosphate + H(+). It participates in tRNA modification. Its function is as follows. Catalyzes the ATP-dependent 2-thiolation of cytidine in position 32 of tRNA, to form 2-thiocytidine (s(2)C32). The sulfur atoms are provided by the cysteine/cysteine desulfurase (IscS) system. This Ruegeria pomeroyi (strain ATCC 700808 / DSM 15171 / DSS-3) (Silicibacter pomeroyi) protein is tRNA-cytidine(32) 2-sulfurtransferase.